The following is a 580-amino-acid chain: Dihydroxy-acid dehydratase (580 aa).

The disordered stretch occupies residues 1–31; it reads MPSGSSESPADALRASDSTPDIKPRSRDVTD. Over residues 20–31 the composition is skewed to basic and acidic residues; the sequence is PDIKPRSRDVTD. C69 is a [2Fe-2S] cluster binding site. D101 is a Mg(2+) binding site. C142 contributes to the [2Fe-2S] cluster binding site. Mg(2+)-binding residues include D143 and K144. Residue K144 is modified to N6-carboxylysine. Residue C219 coordinates [2Fe-2S] cluster. E470 is a binding site for Mg(2+). S496 functions as the Proton acceptor in the catalytic mechanism.

The protein belongs to the IlvD/Edd family. As to quaternary structure, homodimer. [2Fe-2S] cluster is required as a cofactor. Mg(2+) serves as cofactor.

The enzyme catalyses (2R)-2,3-dihydroxy-3-methylbutanoate = 3-methyl-2-oxobutanoate + H2O. The catalysed reaction is (2R,3R)-2,3-dihydroxy-3-methylpentanoate = (S)-3-methyl-2-oxopentanoate + H2O. The protein operates within amino-acid biosynthesis; L-isoleucine biosynthesis; L-isoleucine from 2-oxobutanoate: step 3/4. It participates in amino-acid biosynthesis; L-valine biosynthesis; L-valine from pyruvate: step 3/4. Its function is as follows. Functions in the biosynthesis of branched-chain amino acids. Catalyzes the dehydration of (2R,3R)-2,3-dihydroxy-3-methylpentanoate (2,3-dihydroxy-3-methylvalerate) into 2-oxo-3-methylpentanoate (2-oxo-3-methylvalerate) and of (2R)-2,3-dihydroxy-3-methylbutanoate (2,3-dihydroxyisovalerate) into 2-oxo-3-methylbutanoate (2-oxoisovalerate), the penultimate precursor to L-isoleucine and L-valine, respectively. In Mycobacterium sp. (strain JLS), this protein is Dihydroxy-acid dehydratase.